Reading from the N-terminus, the 197-residue chain is MINKIHGKVIEKKESSLVLMTTVFEFELLVSAFCLANFNLSDKVELFTYLYTRENELKLFGFLNSDEREIFKELIGVSGVGPRAALRVLSNIRYNEFKEAIDKEDIELVSKIKGIGKKMAGKMFLHLQGKLLINSELESTGLFRFKELEESIVSMGFDRKIVNSKIREAFNLAEFANLKDSEKEQFLFKEVLKRISN.

The interval 1–63 is domain I; that stretch reads MINKIHGKVI…ENELKLFGFL (63 aa). The domain II stretch occupies residues 64–139; sequence NSDEREIFKE…KLLINSELES (76 aa). Position 139 (Ser-139) is a region of interest, flexible linker. The domain III stretch occupies residues 140–197; the sequence is TGLFRFKELEESIVSMGFDRKIVNSKIREAFNLAEFANLKDSEKEQFLFKEVLKRISN.

Belongs to the RuvA family. In terms of assembly, homotetramer. Forms an RuvA(8)-RuvB(12)-Holliday junction (HJ) complex. HJ DNA is sandwiched between 2 RuvA tetramers; dsDNA enters through RuvA and exits via RuvB. An RuvB hexamer assembles on each DNA strand where it exits the tetramer. Each RuvB hexamer is contacted by two RuvA subunits (via domain III) on 2 adjacent RuvB subunits; this complex drives branch migration. In the full resolvosome a probable DNA-RuvA(4)-RuvB(12)-RuvC(2) complex forms which resolves the HJ.

It is found in the cytoplasm. The RuvA-RuvB-RuvC complex processes Holliday junction (HJ) DNA during genetic recombination and DNA repair, while the RuvA-RuvB complex plays an important role in the rescue of blocked DNA replication forks via replication fork reversal (RFR). RuvA specifically binds to HJ cruciform DNA, conferring on it an open structure. The RuvB hexamer acts as an ATP-dependent pump, pulling dsDNA into and through the RuvAB complex. HJ branch migration allows RuvC to scan DNA until it finds its consensus sequence, where it cleaves and resolves the cruciform DNA. The protein is Holliday junction branch migration complex subunit RuvA of Borreliella burgdorferi (strain ATCC 35210 / DSM 4680 / CIP 102532 / B31) (Borrelia burgdorferi).